Consider the following 285-residue polypeptide: Probable nudix hydrolase C6G9.05 (285 aa).

Positions 114 to 254 constitute a Nudix hydrolase domain; it reads TRFASVLMPL…DLLYVEFNID (141 aa). Positions 153 to 175 match the Nudix box motif; sequence GRVEPSDGSHYYAALRETYEEIG. Residues E169 and E173 each coordinate Mg(2+).

This sequence belongs to the Nudix hydrolase family. PCD1 subfamily. It depends on Mn(2+) as a cofactor. Mg(2+) is required as a cofactor.

Its function is as follows. Probably mediates the hydrolysis of some nucleoside diphosphate derivatives. This is Probable nudix hydrolase C6G9.05 from Schizosaccharomyces pombe (strain 972 / ATCC 24843) (Fission yeast).